Reading from the N-terminus, the 284-residue chain is L-ribulose-5-phosphate 3-epimerase UlaE (284 aa).

The protein belongs to the L-ribulose-5-phosphate 3-epimerase family.

It catalyses the reaction L-ribulose 5-phosphate = L-xylulose 5-phosphate. It participates in cofactor degradation; L-ascorbate degradation; D-xylulose 5-phosphate from L-ascorbate: step 3/4. Catalyzes the isomerization of L-xylulose-5-phosphate to L-ribulose-5-phosphate. Is involved in the anaerobic L-ascorbate utilization. The protein is L-ribulose-5-phosphate 3-epimerase UlaE of Salmonella paratyphi A (strain AKU_12601).